A 230-amino-acid polypeptide reads, in one-letter code: Orotidine 5'-phosphate decarboxylase (230 aa).

Substrate-binding positions include D16, K38, 65–74 (DLKLHDIGNT), T119, R180, Q189, G209, and R210. Residue K67 is the Proton donor of the active site.

It belongs to the OMP decarboxylase family. Type 1 subfamily. Homodimer.

The catalysed reaction is orotidine 5'-phosphate + H(+) = UMP + CO2. Its pathway is pyrimidine metabolism; UMP biosynthesis via de novo pathway; UMP from orotate: step 2/2. In terms of biological role, catalyzes the decarboxylation of orotidine 5'-monophosphate (OMP) to uridine 5'-monophosphate (UMP). The sequence is that of Orotidine 5'-phosphate decarboxylase from Methylobacterium radiotolerans (strain ATCC 27329 / DSM 1819 / JCM 2831 / NBRC 15690 / NCIMB 10815 / 0-1).